The sequence spans 406 residues: Phosphorylase b kinase gamma catalytic chain, liver/testis isoform (406 aa).

Residues 24-291 form the Protein kinase domain; it reads YDPKDIIGRG…AEQALQHPFF (268 aa). ATP is bound by residues 30 to 38 and Lys-53; that span reads IGRGVSSVV. Asp-153 serves as the catalytic Proton acceptor. The segment at 306–330 is calmodulin-binding (domain-N); sequence QRFRVAVWTILAAGRVALSSHRLRP. The segment at 346 to 370 is calmodulin-binding (domain-C); that stretch reads VRRLIDNCAFRLYGHWVKKGEQQNR.

Belongs to the protein kinase superfamily. CAMK Ser/Thr protein kinase family. As to quaternary structure, hexadecamer of 4 heterotetramers, each composed of alpha, beta, gamma, and delta subunits. Alpha (PHKA1 or PHKA2) and beta (PHKB) are regulatory subunits, gamma (PHKG1 or PHKG2) is the catalytic subunit, and delta is calmodulin.

It carries out the reaction 2 ATP + phosphorylase b = 2 ADP + phosphorylase a.. In terms of biological role, catalytic subunit of the phosphorylase b kinase (PHK), which mediates the neural and hormonal regulation of glycogen breakdown (glycogenolysis) by phosphorylating and thereby activating glycogen phosphorylase. May regulate glycogeneolysis in the testis. In vitro, phosphorylates PYGM. The protein is Phosphorylase b kinase gamma catalytic chain, liver/testis isoform (Phkg2) of Rattus norvegicus (Rat).